The primary structure comprises 59 residues: MSYLVTIFSINAIGVVRRYDTTARSRTDAASVLIKYKAPRGYKFDRFELSRERSIFDVL.

The protein is Early protein GP1A (1A) of Bacillus phage PZA (Bacteriophage PZA).